Consider the following 197-residue polypeptide: Recombination protein RecR (197 aa).

The C4-type zinc-finger motif lies at 57-72 (CSVCFGITEDDPCHLC). The Toprim domain maps to 79 to 174 (TTICVVEEPQ…RVTRLAHGIP (96 aa)).

Belongs to the RecR family.

Its function is as follows. May play a role in DNA repair. It seems to be involved in an RecBC-independent recombinational process of DNA repair. It may act with RecF and RecO. This is Recombination protein RecR from Geotalea daltonii (strain DSM 22248 / JCM 15807 / FRC-32) (Geobacter daltonii).